A 213-amino-acid polypeptide reads, in one-letter code: A-type ATP synthase subunit D (213 aa).

This sequence belongs to the V-ATPase D subunit family. In terms of assembly, has multiple subunits with at least A(3), B(3), C, D, E, F, H, I and proteolipid K(x).

It localises to the cell membrane. Functionally, component of the A-type ATP synthase that produces ATP from ADP in the presence of a proton gradient across the membrane. The polypeptide is A-type ATP synthase subunit D (Saccharolobus islandicus (strain L.S.2.15 / Lassen #1) (Sulfolobus islandicus)).